The sequence spans 1201 residues: DNA-directed RNA polymerase subunit beta' (1201 aa).

Cys60, Cys62, Cys75, and Cys78 together coordinate Zn(2+). The Mg(2+) site is built by Asp449, Asp451, and Asp453. Zn(2+) contacts are provided by Cys818, Cys892, Cys899, and Cys902.

Belongs to the RNA polymerase beta' chain family. In terms of assembly, the RNAP catalytic core consists of 2 alpha, 1 beta, 1 beta' and 1 omega subunit. When a sigma factor is associated with the core the holoenzyme is formed, which can initiate transcription. The cofactor is Mg(2+). Zn(2+) serves as cofactor.

It catalyses the reaction RNA(n) + a ribonucleoside 5'-triphosphate = RNA(n+1) + diphosphate. In terms of biological role, DNA-dependent RNA polymerase catalyzes the transcription of DNA into RNA using the four ribonucleoside triphosphates as substrates. This chain is DNA-directed RNA polymerase subunit beta', found in Listeria monocytogenes serotype 4b (strain F2365).